The sequence spans 267 residues: Probable 6-oxopurine nucleoside phosphorylase (267 aa).

Residues Ser-10, 50–51, and 83–84 contribute to the phosphate site; these read RH and SA. Met-188 is a binding site for substrate. Residue Thr-189 participates in phosphate binding. Position 212–214 (212–214) interacts with substrate; sequence NYA.

Belongs to the PNP/MTAP phosphorylase family. MTAP subfamily. Homohexamer. Dimer of a homotrimer.

The catalysed reaction is a purine D-ribonucleoside + phosphate = a purine nucleobase + alpha-D-ribose 1-phosphate. The enzyme catalyses guanosine + phosphate = alpha-D-ribose 1-phosphate + guanine. It catalyses the reaction inosine + phosphate = alpha-D-ribose 1-phosphate + hypoxanthine. It functions in the pathway purine metabolism; purine nucleoside salvage. Functionally, purine nucleoside phosphorylase which is highly specific for 6-oxopurine nucleosides. Cleaves guanosine or inosine to respective bases and sugar-1-phosphate molecules. Involved in purine salvage. The chain is Probable 6-oxopurine nucleoside phosphorylase from Thermococcus kodakarensis (strain ATCC BAA-918 / JCM 12380 / KOD1) (Pyrococcus kodakaraensis (strain KOD1)).